The following is a 254-amino-acid chain: Probable phosphatase Sbal223_2880 (254 aa).

Zn(2+) is bound by residues histidine 8, histidine 10, histidine 16, histidine 41, glutamate 74, histidine 102, histidine 132, aspartate 193, and histidine 195.

The protein belongs to the PHP family. The cofactor is Zn(2+).

This chain is Probable phosphatase Sbal223_2880, found in Shewanella baltica (strain OS223).